Consider the following 330-residue polypeptide: MASPPAPPAKKRKMNFSEREVEIIVEELERGKHLLINHFNAGVPLAAKAAAWHDILRRVNAVATCHRELPEVKKKWSDLKTEVRRKVAQVRAAMEGGGESQNGGGAGTEGEDPTGATAAPVILTPMQQRICNLLGEATIISLPSGDCGAGRRDRDPHHRLRHHRHADPGVSAAPSEVPAETTYHSLEDGVVEYCTTEAPTTVTAEAPLEMMAHQHEVSAKPQELKSRIALNSAKLLQEQRVTNLHVKEIAQHLEQQNDLLQMIRRSQEVQACAQERQAQAMEGTQAALSALIQVLRPMIKDFRRFLQSNTPSPSVTADPNQTGQQDGIIQ.

The required for nuclear localization and apoptosis-inducing activity stretch occupies residues 1–74 (MASPPAPPAK…CHRELPEVKK (74 aa)). Disordered regions lie at residues 92 to 117 (AAME…TGAT), 147 to 175 (CGAG…AAPS), and 309 to 330 (NTPS…GIIQ). Residues 95-108 (EGGGESQNGGGAGT) show a composition bias toward gly residues.

It belongs to the NAIF1 family.

The protein resides in the nucleus. Induces apoptosis. The polypeptide is Nuclear apoptosis-inducing factor 1 (NAIF1) (Gallus gallus (Chicken)).